The sequence spans 457 residues: Transcription factor CP2-like protein 1 (457 aa).

A mediate transcriptional repression region spans residues 1–52 (MLFWHTQPEHYNQHNSGSYLRDVLALPIFKQEEPQLSPENEARLPPLQYVLC). One can recognise a Grh/CP2 DB domain in the interval 43–280 (RLPPLQYVLC…PSPSYNGSPN (238 aa)). Disordered stretches follow at residues 219–245 (KPKG…KEKY) and 271–301 (PSPS…LPVG). Residues 221 to 245 (KGADRKQETDREKMEKRTAQEKEKY) are compositionally biased toward basic and acidic residues. An SAM2-like domain region spans residues 261–365 (PDVAYQVNSA…IRLFNAIKGR (105 aa)). The span at 271–281 (PSPSYNGSPNS) shows a compositional bias: polar residues.

It belongs to the grh/CP2 family. CP2 subfamily. Forms homohexamers via its SAM-like domain. Interacts with MTA1; which is indispensable for TFCP2L1-mediated self-renewal-promoting effect and endoderm-inhibiting action.

It is found in the nucleus. Functionally, transcription factor that facilitates establishment and maintenance of pluripotency in embryonic stem cells (ESCs). With KLF2, acts as the major effector of self-renewal that mediates induction of pluripotency downstream of LIF/STAT3 and Wnt/beta-catenin signaling. Required for normal duct development in the salivary gland and kidney. Coordinates the development of the kidney collecting ducts intercalated (IC) and principal (PC) cells, which regulate acid-base and salt-water homeostasis, respectively. Regulates the expression of IC genes including subunits B1 and D2 of the V-ATPase complex, OXGR1, CA12, SLC4A1, AQP6 and IC-specific transcription factor FOXI1. Also regulates the expression of JAG1 and subsequent notch signaling in the collecting duct. JAG1 initiates notch signaling in PCs but inhibits notch signaling in ICs. Acts as a transcriptional suppressor that may suppress UBP1-mediated transcriptional activation. Modulates the placental expression of CYP11A1. The chain is Transcription factor CP2-like protein 1 (TFCP2L1) from Pongo abelii (Sumatran orangutan).